Here is a 391-residue protein sequence, read N- to C-terminus: Salivary protein TRIO (391 aa).

The signal sequence occupies residues 1 to 24 (MCRGLSAVLILLVSLSAQLHVVVG). N323 carries an N-linked (GlcNAc...) asparagine glycan.

Female salivary gland (at protein level). Female saliva (at protein level). Not detected in female midgut, head and carcass (at protein level). Not detected in male tissues (at protein level).

Its subcellular location is the secreted. Required for efficient probing on a mammalian host. Alters the local inflammatory response in the host skin following a mosquito bite by suppressing TNF-alpha/TNF expression. In terms of biological role, (Microbial infection) Contributes to optimal transmission of Plasmodium berghei sporozoites to mice. Functionally, (Microbial infection) Contributes to optimal transmission of Plasmodium falciparum sporozoites to mammalian host. This is Salivary protein TRIO from Anopheles gambiae (African malaria mosquito).